The sequence spans 240 residues: Probable transcriptional regulatory protein MS53_0373 (240 aa).

Belongs to the TACO1 family.

The protein resides in the cytoplasm. The chain is Probable transcriptional regulatory protein MS53_0373 from Mycoplasmopsis synoviae (strain 53) (Mycoplasma synoviae).